The sequence spans 344 residues: MPSAGVERHDGARVISIVGPTASGKTGLGIAIARRLADRGERAEIVNADAYQMYRGMDIGTAKASDEERAAVRHHLLDVIEPSETMSVARFQQMARETIADLKSRGIRPILVGGSGLYARAAIDDISFPGTDPQIREHLEERERTEGATALFRELAVKDPQAAEHMDPRNPRRIIRALEVIEVTGKPYSATLPRYRYVIPSVQLGLDLDRADLDKRIDVRTRQMFDGGFVDEVARLRSHLGPTAARALGYQQVIDHLDGLVDLDDTMADIAQKTKRLARKQMGWFGRDPRIHWLSALNPALVDNAMAVIDHADAGDYDAIDMHAQEYVQHHLGDIRRPSGAGPV.

19–26 (GPTASGKT) lines the ATP pocket. 21–26 (TASGKT) provides a ligand contact to substrate.

The protein belongs to the IPP transferase family. In terms of assembly, monomer. Mg(2+) serves as cofactor.

The enzyme catalyses adenosine(37) in tRNA + dimethylallyl diphosphate = N(6)-dimethylallyladenosine(37) in tRNA + diphosphate. Its function is as follows. Catalyzes the transfer of a dimethylallyl group onto the adenine at position 37 in tRNAs that read codons beginning with uridine, leading to the formation of N6-(dimethylallyl)adenosine (i(6)A). This Bifidobacterium animalis subsp. lactis (strain AD011) protein is tRNA dimethylallyltransferase.